The primary structure comprises 377 residues: Nucleoside diphosphate kinase homolog 7 (377 aa).

The region spanning 3 to 91 is the DM10 domain; sequence HSERFVFIAE…YTARQLGSKK (89 aa).

This sequence belongs to the NDK family. Component of sperm flagellar doublet microtubules. Component of the gamma-tubulin ring complex. In terms of tissue distribution, expressed in trachea multiciliated cells.

It is found in the cytoplasm. Its subcellular location is the cytoskeleton. It localises to the microtubule organizing center. The protein localises to the centrosome. The protein resides in the nucleus. It is found in the spindle. Its subcellular location is the cilium axoneme. It localises to the flagellum axoneme. The protein localises to the cell projection. The protein resides in the cilium. In terms of biological role, possesses an intrinsic kinase activity. Displays 3'-5' exonuclease activity with a preference for single-stranded DNA. Does not seem to have nucleoside diphosphate kinase activity. Functional component of the gamma-tubulin ring complex, implicated in the regulation of the microtubule-nucleating activity of the gamma-tubulin ring complex in centrosomes, in a kinase activity-dependent manner. Part of the dynein-decorated doublet microtubules (DMTs) in cilia axoneme, which is required for motile cilia beating. This chain is Nucleoside diphosphate kinase homolog 7 (NME7), found in Bos taurus (Bovine).